Reading from the N-terminus, the 950-residue chain is Translation initiation factor IF-2 (950 aa).

Disordered stretches follow at residues 69–92 (KTKTVPETAKSKQEDHPRTFAGKA) and 128–352 (KPKV…SNVP). 5 stretches are compositionally biased toward basic and acidic residues: residues 77 to 86 (AKSKQEDHPR), 128 to 158 (KPKVAEPVKKSEPKAAAKAEETKVEKVEAKA), 165 to 186 (AEVKTENVADKKEPVVTEEKKK), 200 to 234 (KRAEDIKKEQAAARPEKKKFDKNRNDRNNRNDNRR), and 291 to 312 (NRRDRDRKKTDSNRDNTKDGNR). Polar residues-rich tracts occupy residues 322 to 336 (NRNQVRNARNSNWNQ) and 343 to 352 (YQNNQSSNVP). Residues 448–619 (ERPAVVTIMG…LLVAEVQELK (172 aa)) form the tr-type G domain. The interval 457 to 464 (GHVDHGKT) is G1. 457 to 464 (GHVDHGKT) lines the GTP pocket. Residues 482–486 (GITQH) form a G2 region. Residues 503-506 (DTPG) are G3. GTP is bound by residues 503–507 (DTPGH) and 557–560 (NKID). Residues 557–560 (NKID) form a G4 region. Residues 595 to 597 (SAK) are G5.

Belongs to the TRAFAC class translation factor GTPase superfamily. Classic translation factor GTPase family. IF-2 subfamily.

It is found in the cytoplasm. Its function is as follows. One of the essential components for the initiation of protein synthesis. Protects formylmethionyl-tRNA from spontaneous hydrolysis and promotes its binding to the 30S ribosomal subunits. Also involved in the hydrolysis of GTP during the formation of the 70S ribosomal complex. The polypeptide is Translation initiation factor IF-2 (Lactococcus lactis subsp. cremoris (strain SK11)).